The following is a 223-amino-acid chain: Probable glutathione S-transferase (223 aa).

In terms of domain architecture, GST N-terminal spans 2–81 (AEVKLLGFWY…YIDETFEGPS (80 aa)). Glutathione-binding positions include Ser12, Lys39, Val53, and 65 to 66 (ES). One can recognise a GST C-terminal domain in the interval 86 to 212 (DPYDRALARF…ELLAFFRARF (127 aa)).

This sequence belongs to the GST superfamily. HSP26 family. Root tip-specific expression.

It carries out the reaction RX + glutathione = an S-substituted glutathione + a halide anion + H(+). The protein is Probable glutathione S-transferase of Nicotiana tabacum (Common tobacco).